Here is a 366-residue protein sequence, read N- to C-terminus: MSRPRNNPQTSSPQDSTKDGSSFHYFQGRFELSGKSRQYPADALEPQPGIGDVKVIEKATKSMLDPAQRSHFYLVTPSLVFLCFIFDGLHKALLSVGVSKRSNIVIGNENKETGTLYASKFEDVLPTFTALEMSSILRHCCDLIGIAAGSSDPICTNSLQVQRQFKAMMISIGRPLHSESADLLISYNAGPAIDWINSRPWVGGLMFTFLFGEFESPACELLDQVKVVASKAQMMTYYTVRMFLDQCVDGSTALPAVVLEIPVFEQKKPLAKKVLGDFFEFGGVLRHPVIGVLSPQMFPNLATAANYWAKRRNSTFSGFEALDIIPGSTITFPVLQMASAQKISRGSDMDPYTLNILRGYGISGFE.

Polar residues predominate over residues 1 to 15; the sequence is MSRPRNNPQTSSPQD. Positions 1–22 are disordered; the sequence is MSRPRNNPQTSSPQDSTKDGSS.

In terms of tissue distribution, expression detected by RT-PCR in a few cell lines, including OL, HEK293T and MOLT-4. Not observed in HeLa cells.

May act as an RNA-binding protein. Highly homologous to the bornavirus nucleocapsid N protein that binds viral RNA and oligomerizes. The protein is Endogenous Bornavirus-like nucleoprotein 1 (EBLN1) of Homo sapiens (Human).